We begin with the raw amino-acid sequence, 2161 residues long: SH3 and multiple ankyrin repeat domains protein 1 (2161 aa).

Residues 1 to 53 form a disordered region; that stretch reads MTHSPATSEDEERHSASECPEGGSESDSSPDGPGRGPRGTRGQGSGAPGSLAS. The segment covering 17–32 has biased composition (low complexity); sequence SECPEGGSESDSSPDG. Gly residues predominate over residues 33–47; sequence PGRGPRGTRGQGSGA. Residue Tyr186 is modified to Phosphotyrosine. 6 ANK repeats span residues 212–245, 246–278, 279–312, 313–345, 346–378, and 379–395; these read SGETPLTLAAQTEGSVEVIRTLCLGGAHIDFRAR, DGMTALHKAACARHCLALTALLDLGGSPNYKDR, RGLTPLFHTAMVGGDPRCCELLLFNRAQLGIADE, NGWQEIHQACQRGHSQHLEHLLFYGAEPGAQNA, SGNTALHICALYNKETCARILLYRGADKDVKNN, and NGQTPFQVAVIAGNFEL. 2 disordered regions span residues 412–433 and 455–546; these read ESPKYAARRRGPPGTGLTVPPA and GAAS…SRGR. Residues 455–479 show a composition bias toward low complexity; sequence GAASSGAPGPTSGSQGQSQPSAPTT. Residues 527–542 show a composition bias toward gly residues; it reads PAGGTGGSGGPGGSLG. Ser540 carries the post-translational modification Phosphoserine. At Arg544 the chain carries Omega-N-methylarginine. The SH3 domain occupies 554-613; sequence VPGRSFMAVKSYQAQAEGEISLSKGEKIKVLSIGEGGFWEGQVKGRVGWFPSDCLEEVAN. One can recognise a PDZ domain in the interval 663 to 757; that stretch reads TVLLQKKDSE…TLMVKVVMVT (95 aa). 2 positions are modified to phosphoserine: Ser671 and Ser791. Residues 832 to 886 form a disordered region; the sequence is TISASESPGPGGLASLGKHRPKGFFATESSFDPHHRAQPSYERPSFLPPGPGLML. Ser890 is modified (phosphoserine). 7 disordered regions span residues 909-1229, 1241-1289, 1353-1720, 1734-1785, 1827-1860, 1892-1983, and 1996-2023; these read SRSL…LDFT, RREG…KSID, LGLA…GVAS, GQAF…PTSP, LPTASSLPRKLLPWEEGPGPPPPPLPGPLAQPQA, PWAR…TRHL, and RRAPSPSLLPASEHKVSPAPRPSSLPIL. Residues 920–939 are compositionally biased toward pro residues; that stretch reads IPPPPTTSPPEPPYSTPPVP. Residue Arg950 is modified to Omega-N-methylarginine. Basic residues predominate over residues 996 to 1020; that stretch reads AHHHPPHHHHHHAPPPQPHHHHAHP. Omega-N-methylarginine is present on residues Arg1051, Arg1090, and Arg1101. Pro residues predominate over residues 1127-1144; the sequence is PPAPSPTSPASPQPPPAV. Over residues 1164–1181 the composition is skewed to low complexity; it reads STSSSGRSSQGSSTEAEP. Residues 1199–1220 show a composition bias toward pro residues; it reads SPAPAMSPVPPSPSPVPTPASP. Positions 1241-1252 are enriched in basic and acidic residues; the sequence is RREGGWQNEARR. Asymmetric dimethylarginine is present on Arg1253. Ser1287 bears the Phosphoserine mark. Residues 1359 to 1368 show a composition bias toward basic and acidic residues; sequence ARERALKESS. Over residues 1374–1391 the composition is skewed to pro residues; the sequence is PQPPPRPPSPRYEAPPPT. Arg1423 bears the Omega-N-methylarginine mark. A Phosphoserine modification is found at Ser1436. Pro residues-rich tracts occupy residues 1517 to 1532 and 1583 to 1609; these read GVPPPSPRRSVPPSPT and PLTPGPPHPLPDTPAPATPLPPVPPPA. A compositionally biased stretch (polar residues) spans 1618-1636; that stretch reads DSTASSLTSYDSEVATLTQ. Residues 1644–1670 are compositionally biased toward pro residues; sequence DPHPPGPPAPAAPAPAAPQPGPDPPPG. The span at 1678-1688 shows a compositional bias: basic and acidic residues; that stretch reads VDSRSSSDHPL. Over residues 1692-1702 the composition is skewed to low complexity; the sequence is SSASTLSSLSA. 2 stretches are compositionally biased toward gly residues: residues 1703–1718 and 1764–1774; these read EGGGSAGGGGGAGAGV and ASGGLRPGPSG. Residues 1775–1785 show a composition bias toward low complexity; that stretch reads GLRDPVTPTSP. Pro residues predominate over residues 1844 to 1855; that stretch reads PGPPPPPLPGPL. An Omega-N-methylarginine modification is found at Arg1895. 3 stretches are compositionally biased toward low complexity: residues 1917 to 1940, 1954 to 1980, and 1996 to 2006; these read SSLQRQRLSDDSQSSLLSKPVSSL, TGTGVSPTAAAAPGATSPSASSSSTST, and RRAPSPSLLPA. Omega-N-methylarginine occurs at positions 2016, 2036, and 2074. Positions 2098–2161 constitute an SAM domain; sequence WTKFDVADWL…DRALKFFLER (64 aa).

It belongs to the SHANK family. May homomultimerize via its SAM domain. Interacts with the C-terminus of SSTR2 via the PDZ domain. Interacts with IGSF9, SHARPIN, SPTAN1, HOMER1 and DLGAP1/GKAP isoforms 1 and 2. Part of a complex with DLG4/PSD-95 and DLGAP1/GKAP. Interacts with BAIAP2. Interacts with HOMER1 and HOMER3. Expressed in brain particularly in the amygdala, hippocampus, substantia nigra and thalamus. Isoform 2 seems to be expressed ubiquitously.

The protein resides in the cytoplasm. It is found in the postsynaptic density. The protein localises to the synapse. Functionally, seems to be an adapter protein in the postsynaptic density (PSD) of excitatory synapses that interconnects receptors of the postsynaptic membrane including NMDA-type and metabotropic glutamate receptors via complexes with GKAP/PSD-95 and Homer, respectively, and the actin-based cytoskeleton. Plays a role in the structural and functional organization of the dendritic spine and synaptic junction. The protein is SH3 and multiple ankyrin repeat domains protein 1 (SHANK1) of Homo sapiens (Human).